The chain runs to 489 residues: Protein TOS4 (489 aa).

Polar residues-rich tracts occupy residues 1–10 (MSSQFPSSPY) and 20–32 (NYKQQPNCPSSNY). A disordered region spans residues 1–101 (MSSQFPSSPY…FSSKLSSPSR (101 aa)). At Ser-40 the chain carries Phosphoserine. Positions 56–68 (PSSSIGRVSSPVR) are enriched in polar residues. Residues 89–100 (SPKFSSKLSSPS) are compositionally biased toward low complexity. Ser-100 bears the Phosphoserine mark. The FHA domain occupies 118 to 170 (ITVGRNSSQCDVALCKNKFISRVHASITYLPQTNEVKIHCFSMNGLIVTYRKQ). The disordered stretch occupies residues 316–366 (SSPLSSVSSVDHEEQTLRQDSLSSDKNPMTMKKPKLNKRVLPSKPKKSVKE). A compositionally biased stretch (polar residues) spans 333–342 (RQDSLSSDKN).

The protein belongs to the PLM2/TOS4 family. Phosphorylated by CDC28.

It is found in the nucleus. In terms of biological role, binds to the promoters of genes with functions important for the G1/S (start) transition; primarily genes involved in pheromone response, polarized growth and transcription. The polypeptide is Protein TOS4 (TOS4) (Saccharomyces cerevisiae (strain ATCC 204508 / S288c) (Baker's yeast)).